The chain runs to 183 residues: Putative 3-methyladenine DNA glycosylase (183 aa).

This sequence belongs to the DNA glycosylase MPG family.

This is Putative 3-methyladenine DNA glycosylase from Legionella pneumophila (strain Lens).